Here is a 489-residue protein sequence, read N- to C-terminus: Protein LMBR1L (489 aa).

Topologically, residues 1–21 are extracellular; that stretch reads MEAPDCEVLSVREQLFHERIR. Residues 1–59 are interaction with LGB; that stretch reads MEAPDCEVLSVREQLFHERIRECIISTLLFATLYILCHIFLTRFKKPAEFTTVDDADAT. Positions 1 to 76 are LCN1-binding; sequence MEAPDCEVLS…LCTFTLAIAL (76 aa). A helical membrane pass occupies residues 22-42; sequence ECIISTLLFATLYILCHIFLT. At 43–66 the chain is on the cytoplasmic side; that stretch reads RFKKPAEFTTVDDADATVNKIALE. The chain crosses the membrane as a helical span at residues 67 to 87; that stretch reads LCTFTLAIALGAVLLLPFSII. The Extracellular portion of the chain corresponds to 88–114; sequence SNEVLLSLPRNYYIQWLNGSLIHGLWN. The helical transmembrane segment at 115–135 threads the bilayer; it reads LVFLFSNLSLIFLMPFAYFFT. The Cytoplasmic portion of the chain corresponds to 136–154; it reads ESEGFAGSRKGVLGRVYET. The helical transmembrane segment at 155 to 175 threads the bilayer; sequence VVMLMLLTLLVLGMVWVASAI. The Extracellular portion of the chain corresponds to 176-196; the sequence is VDNNKASRESLYDFWEYYLPY. A helical transmembrane segment spans residues 197-217; it reads LYSCISFLGVLLLLVCTPLGL. Topologically, residues 218-305 are cytoplasmic; the sequence is ARMFSVTGKL…NLGYPLAMLC (88 aa). The helical transmembrane segment at 306–326 threads the bilayer; that stretch reads LLVLTGLSVLIVAIHILELLI. At 327 to 350 the chain is on the extracellular side; sequence DEAAMPRGMQGASLGQVSFSKLGS. The chain crosses the membrane as a helical span at residues 351–371; that stretch reads FGAVVQVVLIFYLMVSSVVGF. Residues 372–388 are Cytoplasmic-facing; it reads YSSPLFRSLRPRWHDTA. The helical transmembrane segment at 389 to 409 threads the bilayer; sequence MTQIIGNCVCLLVLSSALPVF. Residues 410 to 431 are Extracellular-facing; it reads SRTLGLTRFDLLGDFGRFNWLG. Residues 432-452 form a helical membrane-spanning segment; it reads NFYIVFLYNAAFAGLTTLCLV. Topologically, residues 453–489 are cytoplasmic; that stretch reads KTFTAAVRAELIRAFGLDRLPLPVSGFPRASRKTQHQ.

It belongs to the LIMR family. As to quaternary structure, dimer. Can also form higher oligomers. Interacts with LCN1; this interaction mediates the endocytosis of LCN1. Interacts with UBAC2, FAF2, VCP, AMFR, ZNRF3, CTNNB1, LRP6, GSK3A, GSK3B, FZD6, DVL2 and RNF43. Interaction with LGB and SCGB1A1 is controversial.

The protein localises to the cell membrane. Its subcellular location is the endoplasmic reticulum membrane. Functionally, plays an essential role in lymphocyte development by negatively regulating the canonical Wnt signaling pathway. In association with UBAC2 and E3 ubiquitin-protein ligase AMFR, promotes the ubiquitin-mediated degradation of CTNNB1 and Wnt receptors FZD6 and LRP6. LMBR1L stabilizes the beta-catenin destruction complex that is required for regulating CTNNB1 levels. Acts as a LCN1 receptor and can mediate its endocytosis. This Macaca fascicularis (Crab-eating macaque) protein is Protein LMBR1L (LMBR1L).